The sequence spans 121 residues: Small ribosomal subunit protein bS16 (121 aa).

Positions 85–110 are enriched in basic and acidic residues; it reads REARNNPKKAEPGKKAQERAAERAAK. The tract at residues 85 to 121 is disordered; sequence REARNNPKKAEPGKKAQERAAERAAKAAEASEAASAE. The span at 111–121 shows a compositional bias: low complexity; sequence AAEASEAASAE.

Belongs to the bacterial ribosomal protein bS16 family.

The polypeptide is Small ribosomal subunit protein bS16 (Azorhizobium caulinodans (strain ATCC 43989 / DSM 5975 / JCM 20966 / LMG 6465 / NBRC 14845 / NCIMB 13405 / ORS 571)).